The primary structure comprises 329 residues: GTP 3',8-cyclase (329 aa).

Positions 8 to 234 (AFARKFYYLR…QLRQRSDGPA (227 aa)) constitute a Radical SAM core domain. Arg-17 is a binding site for GTP. [4Fe-4S] cluster is bound by residues Cys-24 and Cys-28. An S-adenosyl-L-methionine-binding site is contributed by Tyr-30. Cys-31 provides a ligand contact to [4Fe-4S] cluster. GTP is bound at residue Arg-68. Gly-72 is a binding site for S-adenosyl-L-methionine. Position 99 (Thr-99) interacts with GTP. S-adenosyl-L-methionine is bound at residue Ser-123. Lys-160 contacts GTP. Residue Met-194 coordinates S-adenosyl-L-methionine. Residues Cys-257 and Cys-260 each coordinate [4Fe-4S] cluster. 262 to 264 (RLR) is a GTP binding site. [4Fe-4S] cluster is bound at residue Cys-274.

Belongs to the radical SAM superfamily. MoaA family. In terms of assembly, monomer and homodimer. [4Fe-4S] cluster is required as a cofactor.

It carries out the reaction GTP + AH2 + S-adenosyl-L-methionine = (8S)-3',8-cyclo-7,8-dihydroguanosine 5'-triphosphate + 5'-deoxyadenosine + L-methionine + A + H(+). The protein operates within cofactor biosynthesis; molybdopterin biosynthesis. Functionally, catalyzes the cyclization of GTP to (8S)-3',8-cyclo-7,8-dihydroguanosine 5'-triphosphate. The chain is GTP 3',8-cyclase from Escherichia fergusonii (strain ATCC 35469 / DSM 13698 / CCUG 18766 / IAM 14443 / JCM 21226 / LMG 7866 / NBRC 102419 / NCTC 12128 / CDC 0568-73).